We begin with the raw amino-acid sequence, 77 residues long: UPF0291 protein Bsph_1689 (77 aa).

This sequence belongs to the UPF0291 family.

Its subcellular location is the cytoplasm. The protein is UPF0291 protein Bsph_1689 of Lysinibacillus sphaericus (strain C3-41).